Consider the following 806-residue polypeptide: Centrosomal protein of 85 kDa-like (806 aa).

Disordered regions lie at residues 1–27, 51–89, and 101–146; these read MWGR…AGSD, NNHL…LSFK, and HVMP…SSLD. Phosphoserine is present on Ser-15. A compositionally biased stretch (polar residues) spans 60-74; sequence TSDSGDTGIGTSCSD. Residues 135–146 show a composition bias toward basic and acidic residues; it reads DHSRGERDSSLD. Residue Ser-207 is modified to Phosphoserine. Positions 308 to 353 are disordered; that stretch reads PLEGRTTDDSYSLAPWQQPQTEEFQQGSETPMQVLTGSSRQSYSPP. Polar residues predominate over residues 322–351; the sequence is PWQQPQTEEFQQGSETPMQVLTGSSRQSYS. A coiled-coil region spans residues 442-644; that stretch reads QEELEQKLAS…ILEIQSMQGK (203 aa).

Belongs to the CEP85 family.

Its subcellular location is the cytoplasm. It localises to the cytoskeleton. The protein localises to the microtubule organizing center. It is found in the centrosome. Plays an essential role in neuronal cell migration. This chain is Centrosomal protein of 85 kDa-like, found in Mus musculus (Mouse).